The chain runs to 394 residues: Protein NDRG1 (394 aa).

Ser-2 carries the post-translational modification N-acetylserine. Phosphoserine is present on residues Ser-2, Ser-319, and Ser-326. Positions 325–394 are disordered; it reads RSRTASGSSV…AGPKSMEVSC (70 aa). Residues 327–339 are compositionally biased toward polar residues; it reads RTASGSSVTSLEG. Thr-328 bears the Phosphothreonine mark. A Phosphoserine; by SGK1 modification is found at Ser-330. Ser-332 and Ser-333 each carry phosphoserine. Position 335 is a phosphothreonine (Thr-335). Phosphoserine is present on Ser-336. Repeat copies occupy residues 339-348, 349-358, and 359-368. Positions 339 to 368 are 3 X 10 AA tandem repeats of G-[PST]-R-S-R-S-H-T-S-E; that stretch reads GTRSRSHTSEGPRSRSHTSEGSRSRSHTSE. The residue at position 340 (Thr-340) is a Phosphothreonine. A Phosphoserine modification is found at Ser-342. Over residues 345-371 the composition is skewed to basic and acidic residues; the sequence is HTSEGPRSRSHTSEGSRSRSHTSEDAR. Residue Thr-346 is modified to Phosphothreonine; by SGK1. Ser-352 bears the Phosphoserine mark. At Thr-356 the chain carries Phosphothreonine; by SGK1. 2 positions are modified to phosphoserine: Ser-362 and Ser-364. Phosphothreonine; by SGK1 is present on Thr-366. Polar residues predominate over residues 374–386; sequence ITPNSGATGNNAG. Thr-375 is modified (phosphothreonine).

It belongs to the NDRG family. As to quaternary structure, interacts with RAB4A (membrane-bound form); the interaction involves NDRG1 in vesicular recycling of CDH1. Interacts with APOA1, APOA2, PRA1 and RTN1. In terms of processing, under stress conditions, phosphorylated in the C-terminal on many serine and threonine residues. Phosphorylated in vitro by PKA. Phosphorylation enhanced by increased intracellular cAMP levels. Homocysteine induces dephosphorylation. Phosphorylation by SGK1 is cell cycle dependent. Widely expressed, with highest levels in kidney followed by brain, pancreas, small intestine, colon and spleen (at protein level). Also detected in heart and preputial gland, and in much smaller quantities in other tissues. Not detected in duodenum and prostate. Highly expressed in Schwann cells.

It localises to the cytoplasm. The protein resides in the cytosol. The protein localises to the cytoskeleton. Its subcellular location is the microtubule organizing center. It is found in the centrosome. It localises to the nucleus. The protein resides in the cell membrane. Stress-responsive protein involved in hormone responses, cell growth, and differentiation. Acts as a tumor suppressor in many cell types. Necessary but not sufficient for p53/TP53-mediated caspase activation and apoptosis. Required for vesicular recycling of CDH1 and TF. May also function in lipid trafficking. Protects cells from spindle disruption damage. Functions in p53/TP53-dependent mitotic spindle checkpoint. Regulates microtubule dynamics and maintains euploidy. Has a role in cell trafficking notably of the Schwann cell and is necessary for the maintenance and development of the peripheral nerve myelin sheath. The sequence is that of Protein NDRG1 (Ndrg1) from Mus musculus (Mouse).